Reading from the N-terminus, the 177-residue chain is Inorganic pyrophosphatase (177 aa).

The substrate site is built by K30, R44, and Y56. D66, D71, and D103 together coordinate Mg(2+). Y142 contacts substrate.

Belongs to the PPase family. As to quaternary structure, homohexamer. Requires Mg(2+) as cofactor.

It localises to the cytoplasm. It carries out the reaction diphosphate + H2O = 2 phosphate + H(+). Its function is as follows. Catalyzes the hydrolysis of inorganic pyrophosphate (PPi) forming two phosphate ions. The protein is Inorganic pyrophosphatase of Agrobacterium fabrum (strain C58 / ATCC 33970) (Agrobacterium tumefaciens (strain C58)).